A 326-amino-acid polypeptide reads, in one-letter code: uncharacterized protein (326 aa).

3 Solcar repeats span residues 20 to 107 (QDSN…CKKK), 120 to 219 (LTNT…LREF), and 231 to 322 (KSNL…VCDS). 6 helical membrane-spanning segments follow: residues 24-40 (IAFL…RTVV), 84-104 (GLNC…YEAC), 126-143 (LFSG…TYPL), 195-213 (VWPT…FAVY), 237-254 (LTIG…TYPF), and 297-316 (GLAA…WLVY).

It belongs to the mitochondrial carrier (TC 2.A.29) family.

The protein resides in the mitochondrion inner membrane. This is an uncharacterized protein from Saccharomyces cerevisiae (strain ATCC 204508 / S288c) (Baker's yeast).